We begin with the raw amino-acid sequence, 210 residues long: Meiotic coiled-coil protein 7 (210 aa).

The stretch at 77 to 148 (KRSRESVLGS…LKTQLSNLNH (72 aa)) forms a coiled coil.

Belongs to the MND1 family. In terms of assembly, interacts with meu13.

The protein localises to the cytoplasm. The protein resides in the nucleus. In terms of biological role, required for meiotic recombination. This is Meiotic coiled-coil protein 7 (mcp7) from Schizosaccharomyces pombe (strain 972 / ATCC 24843) (Fission yeast).